Here is a 462-residue protein sequence, read N- to C-terminus: tRNA wybutosine-synthesizing protein 2 (462 aa).

S-adenosyl-L-methionine-binding positions include serine 257, lysine 264, and 305–306; that span reads EL.

This sequence belongs to the class I-like SAM-binding methyltransferase superfamily. TRM5/TYW2 family.

It localises to the cytoplasm. It carries out the reaction 4-demethylwyosine(37) in tRNA(Phe) + S-adenosyl-L-methionine = 4-demethyl-7-[(3S)-3-amino-3-carboxypropyl]wyosine(37) in tRNA(Phe) + S-methyl-5'-thioadenosine + H(+). The protein operates within tRNA modification; wybutosine-tRNA(Phe) biosynthesis. In terms of biological role, S-adenosyl-L-methionine-dependent transferase that acts as a component of the wybutosine biosynthesis pathway. Wybutosine is a hyper modified guanosine with a tricyclic base found at the 3'-position adjacent to the anticodon of eukaryotic phenylalanine tRNA. Catalyzes the transfer of the alpha-amino-alpha-carboxypropyl (acp) group from S-adenosyl-L-methionine to the C-7 position of 4-demethylwyosine (imG-14) to produce wybutosine-86. This chain is tRNA wybutosine-synthesizing protein 2 (TRM12), found in Saccharomyces cerevisiae (strain ATCC 204508 / S288c) (Baker's yeast).